The chain runs to 314 residues: Transmembrane protein 248 (314 aa).

Residues 21-41 (VVFMISVSAMAIAFLTLGYFF) form a helical membrane-spanning segment. The segment at 78–106 (LTNDTTTPESTMTSGQARASTQSPQALED) is disordered. Residues 80–102 (NDTTTPESTMTSGQARASTQSPQ) show a composition bias toward polar residues. The next 3 membrane-spanning stretches (helical) occupy residues 179-199 (QVVFTACMTLTASPGVFPVTV), 236-258 (FWCYKGAIGKVYHALNPKLTVIV), and 270-290 (LMHTSYFLFVMVITMFCYAVI).

Belongs to the TMEM248 family.

It localises to the membrane. The protein is Transmembrane protein 248 (TMEM248) of Homo sapiens (Human).